Consider the following 219-residue polypeptide: Cell division protein B2 (219 aa).

In terms of biological role, part of a cell division machinery. In Sulfolobus acidocaldarius (strain ATCC 33909 / DSM 639 / JCM 8929 / NBRC 15157 / NCIMB 11770), this protein is Cell division protein B2.